The chain runs to 512 residues: Immunoglobulin delta heavy chain (512 aa).

Ig-like domains are found at residues 1 to 97 (RLQL…MYYC) and 135 to 227 (PDVF…KEIF). Residues 1–129 (RLQLQESGPG…GQGTTVHVSS (129 aa)) are variable (V) domain, involved in antigen recognition. Cystine bridges form between Cys-22-Cys-97 and Cys-157-Cys-213. The segment at 130–512 (APTKAPDVFP…VSYVTDHGPM (383 aa)) is constant (C) domain. Positions 225-296 (EIFRWPESPK…TPECPSHTQP (72 aa)) are disordered. A compositionally biased stretch (polar residues) spans 235–247 (AQASSVPTAQPQA). O-linked (GalNAc...) serine glycosylation is present at Ser-238. 4 O-linked (GalNAc...) threonine glycosylation sites follow: Thr-255, Thr-256, Thr-260, and Thr-261. The segment covering 267 to 287 (GGEEKKKEKEKEEQEERETKT) has biased composition (basic and acidic residues). Ig-like domains follow at residues 304–392 (PAVQ…RLMA) and 396–502 (PAAQ…RSLE). 2 disulfides stabilise this stretch: Cys-319-Cys-378 and Cys-423-Cys-484. Asn-354, Asn-445, and Asn-496 each carry an N-linked (GlcNAc...) asparagine glycan.

Immunoglobulins are composed of two identical heavy chains and two identical light chains; disulfide-linked. An IgD molecule contains thus a delta heavy chain combined with either a kappa or a lambda light chains. Kappa light chains are found predominantly on the membrane IgD (mIgD) form and lambda on the secreted IgD (sIgD) form, this fact is poorly understood. Membrane-bound IgD molecules are non-covalently associated with a heterodimer of CD79A and CD79B.

It localises to the secreted. It is found in the cell membrane. Immunoglobulins, also known as antibodies, are membrane-bound or secreted glycoproteins produced by B lymphocytes. In the recognition phase of humoral immunity, the membrane-bound immunoglobulins serve as receptors which, upon binding of a specific antigen, trigger the clonal expansion and differentiation of B lymphocytes into immunoglobulins-secreting plasma cells. Secreted immunoglobulins mediate the effector phase of humoral immunity, which results in the elimination of bound antigens. The antigen binding site is formed by the variable domain of one heavy chain, together with that of its associated light chain. Thus, each immunoglobulin has two antigen binding sites with remarkable affinity for a particular antigen. The variable domains are assembled by a process called V-(D)-J rearrangement and can then be subjected to somatic hypermutations which, after exposure to antigen and selection, allow affinity maturation for a particular antigen. IgD is the major antigen receptor isotype on the surface of most peripheral B cells, where it is coexpressed with IgM. The membrane-bound IgD (mIgD) induces the phosphorylation of CD79A and CD79B by the Src family of protein tyrosine kinases. Soluble IgD (sIgD) concentration in serum is below those of IgG, IgA, and IgM but much higher than that of IgE. IgM and IgD molecules present on B cells have identical V regions and antigen-binding sites. After the antigen binds to the B cell receptor, the secreted form sIgD is shut off. IgD is a potent inducer of TNF, IL1B, and IL1RN. IgD also induces release of IL6, IL10, and LIF from peripheral blood mononuclear cells. Monocytes seem to be the main producers of cytokines in vitro in the presence of IgD. This is Immunoglobulin delta heavy chain from Homo sapiens (Human).